Reading from the N-terminus, the 300-residue chain is Acetylglutamate kinase (300 aa).

Residues 72-73 (GG), arginine 94, and asparagine 197 contribute to the substrate site.

It belongs to the acetylglutamate kinase family. ArgB subfamily.

The protein resides in the cytoplasm. The catalysed reaction is N-acetyl-L-glutamate + ATP = N-acetyl-L-glutamyl 5-phosphate + ADP. It participates in amino-acid biosynthesis; L-arginine biosynthesis; N(2)-acetyl-L-ornithine from L-glutamate: step 2/4. Its function is as follows. Catalyzes the ATP-dependent phosphorylation of N-acetyl-L-glutamate. This is Acetylglutamate kinase from Azoarcus sp. (strain BH72).